Reading from the N-terminus, the 277-residue chain is Large ribosomal subunit protein uL2 (277 aa).

Residues Met-225 to Arg-277 form a disordered region. Basic residues predominate over residues Lys-254–His-264.

It belongs to the universal ribosomal protein uL2 family. Part of the 50S ribosomal subunit. Forms a bridge to the 30S subunit in the 70S ribosome.

Functionally, one of the primary rRNA binding proteins. Required for association of the 30S and 50S subunits to form the 70S ribosome, for tRNA binding and peptide bond formation. It has been suggested to have peptidyltransferase activity; this is somewhat controversial. Makes several contacts with the 16S rRNA in the 70S ribosome. This chain is Large ribosomal subunit protein uL2, found in Anaplasma marginale (strain Florida).